A 170-amino-acid polypeptide reads, in one-letter code: Cytochrome b6-f complex subunit 4 (170 aa).

3 helical membrane passes run 46-66 (LLFM…GLAV), 105-125 (LLGI…PFIE), and 141-161 (TVFL…TLPL).

This sequence belongs to the cytochrome b family. PetD subfamily. In terms of assembly, the 4 large subunits of the cytochrome b6-f complex are cytochrome b6, subunit IV (17 kDa polypeptide, PetD), cytochrome f and the Rieske protein, while the 4 small subunits are PetG, PetL, PetM and PetN. The complex functions as a dimer.

The protein localises to the cellular thylakoid membrane. Functionally, component of the cytochrome b6-f complex, which mediates electron transfer between photosystem II (PSII) and photosystem I (PSI), cyclic electron flow around PSI, and state transitions. This is Cytochrome b6-f complex subunit 4 from Synechococcus sp. (strain JA-3-3Ab) (Cyanobacteria bacterium Yellowstone A-Prime).